The chain runs to 294 residues: Histone deacetylase HDT3 (294 aa).

M1 bears the N-acetylmethionine mark. A required to repress transcription region spans residues 2–5 (EFWG). The disordered stretch occupies residues 124 to 269 (QVNFQLPNED…TPKSAGAFGC (146 aa)). Positions 140 to 188 (DDADGSEEDSSDDDDSENSGDEEEEKVTAESDSEEDDSSDDEEDDSSEE) are enriched in acidic residues. A compositionally biased stretch (basic and acidic residues) spans 189–202 (ETPKKPEEPKKRSA). The span at 203-213 (EPNSSKNPASN) shows a compositional bias: low complexity. Polar residues predominate over residues 252–262 (GETSKQQQTPK). A C2H2-type zinc finger spans residues 267-290 (FGCKSCTRTFTSEMGLQSHTKAKH).

It belongs to the histone deacetylase HD2 family. Interacts with DNMT2. Expressed in leaves, roots, stems, young plantlets, flowers and siliques. Highest levels in ovules, embryos, shoot apical meristems and first leaves. Also expressed in somatic embryos.

It is found in the nucleus. It localises to the nucleolus. Functionally, probably mediates the deacetylation of lysine residues on the N-terminal part of the core histones (H2A, H2B, H3 and H4). Histone deacetylation gives a tag for epigenetic repression and plays an important role in transcriptional regulation, cell cycle progression and developmental events. Involved in the modulation of abscisic acid and stress-responsive genes. The chain is Histone deacetylase HDT3 (HDT3) from Arabidopsis thaliana (Mouse-ear cress).